Consider the following 354-residue polypeptide: Methionine import ATP-binding protein MetN 2 (354 aa).

In terms of domain architecture, ABC transporter spans 6–250; it reads IELKNISVHF…PQKPLTKEFI (245 aa). An ATP-binding site is contributed by 42–49; it reads GYSGAGKS.

This sequence belongs to the ABC transporter superfamily. Methionine importer (TC 3.A.1.24) family. The complex is composed of two ATP-binding proteins (MetN), two transmembrane proteins (MetI) and a solute-binding protein (MetQ).

It is found in the cell membrane. It carries out the reaction L-methionine(out) + ATP + H2O = L-methionine(in) + ADP + phosphate + H(+). The enzyme catalyses D-methionine(out) + ATP + H2O = D-methionine(in) + ADP + phosphate + H(+). Functionally, part of the ABC transporter complex MetNIQ involved in methionine import. Responsible for energy coupling to the transport system. The chain is Methionine import ATP-binding protein MetN 2 from Oenococcus oeni (strain ATCC BAA-331 / PSU-1).